The sequence spans 207 residues: GILT-like protein 2 (207 aa).

An N-terminal signal peptide occupies residues 1–19 (MRAAVFVCLLLGWVGVATP). Cys40 and Cys43 are oxidised to a cystine. A glycan (N-linked (GlcNAc...) asparagine) is linked at Asn182.

This sequence belongs to the GILT family.

It is found in the secreted. Its function is as follows. Probable lysosomal thiol reductase that can reduce protein disulfide bonds. Involved in the immune response to bacterial infection. This Drosophila melanogaster (Fruit fly) protein is GILT-like protein 2.